The following is a 400-amino-acid chain: Enoyl-[acyl-carrier-protein] reductase [NADH] 2 (400 aa).

NAD(+) contacts are provided by residues 48–53, 75–76, 112–113, and 141–142; these read GASSGF, FE, DA, and LA. Tyr-228 is a binding site for substrate. Residue Tyr-238 is the Proton donor of the active site. Residues Lys-247 and 276–278 contribute to the NAD(+) site; that span reads LVT.

The protein belongs to the TER reductase family. In terms of assembly, monomer.

The enzyme catalyses a 2,3-saturated acyl-[ACP] + NAD(+) = a (2E)-enoyl-[ACP] + NADH + H(+). Its pathway is lipid metabolism; fatty acid biosynthesis. Involved in the final reduction of the elongation cycle of fatty acid synthesis (FAS II). Catalyzes the reduction of a carbon-carbon double bond in an enoyl moiety that is covalently linked to an acyl carrier protein (ACP). The chain is Enoyl-[acyl-carrier-protein] reductase [NADH] 2 from Vibrio vulnificus (strain YJ016).